We begin with the raw amino-acid sequence, 145 residues long: Basic phospholipase A2 S11-61 (145 aa).

The signal sequence occupies residues 1 to 19; the sequence is MYPVHLLVLLAVCVSLLGA. Residues 20–27 constitute a propeptide that is removed on maturation; the sequence is SNIPPQPL. 7 cysteine pairs are disulfide-bonded: cysteine 38–cysteine 98, cysteine 54–cysteine 144, cysteine 56–cysteine 72, cysteine 71–cysteine 125, cysteine 78–cysteine 118, cysteine 87–cysteine 111, and cysteine 105–cysteine 116. Residues tyrosine 55, glycine 57, and glycine 59 each contribute to the Ca(2+) site. Residue histidine 75 is part of the active site. Residue aspartate 76 coordinates Ca(2+). The active site involves aspartate 119.

The protein belongs to the phospholipase A2 family. Group I subfamily. D49 sub-subfamily. Requires Ca(2+) as cofactor. Expressed by the venom gland.

The protein localises to the secreted. It catalyses the reaction a 1,2-diacyl-sn-glycero-3-phosphocholine + H2O = a 1-acyl-sn-glycero-3-phosphocholine + a fatty acid + H(+). Snake venom phospholipase A2 (PLA2) that inhibits collagen-induced platelet aggregation. PLA2 catalyzes the calcium-dependent hydrolysis of the 2-acyl groups in 3-sn-phosphoglycerides. The polypeptide is Basic phospholipase A2 S11-61 (Austrelaps superbus (Lowland copperhead snake)).